We begin with the raw amino-acid sequence, 491 residues long: Probable CtpA-like serine protease (491 aa).

The tract at residues 1–22 is disordered; that stretch reads MSESKDTTEVNQEVNEKASSQS. Positions 9-22 are enriched in polar residues; it reads EVNQEVNEKASSQS. Residues 34–54 form a helical membrane-spanning segment; that stretch reads FIIILIVTILVTAMIAVFATI. Residues 119-201 enclose the PDZ domain; it reads TKSFNEDVSG…TKVTLTIERG (83 aa). Active-site charge relay system residues include S324, D335, and K349.

This sequence belongs to the peptidase S41A family.

It is found in the cell membrane. The protein is Probable CtpA-like serine protease of Staphylococcus saprophyticus subsp. saprophyticus (strain ATCC 15305 / DSM 20229 / NCIMB 8711 / NCTC 7292 / S-41).